Reading from the N-terminus, the 953-residue chain is Homeobox protein LUMINIDEPENDENS (953 aa).

Residues 63–123 (KIGKRPRDLL…VTQKTRVRKQ (61 aa)) constitute a DNA-binding region (homeobox). The disordered stretch occupies residues 404-430 (EQPGQKAAGKSPQTVRIGTSGRSRPMS). Over residues 414 to 425 (SPQTVRIGTSGR) the composition is skewed to polar residues. A run of 5 repeats spans residues 498–502 (QPVNG), 507–511 (QPVNG), 516–520 (QPVNG), 525–529 (QPVNG), and 534–538 (QPVNG). Residues 498-538 (QPVNGFSTIQPVNGPSAVQPVNGPLAVQPVNGPSALQPVNG) form a 5 X 5 AA repeats of Q-P-V-N-G region. Disordered stretches follow at residues 606–668 (NSKE…EPQD), 733–763 (APNS…NPGM), and 861–953 (VGQM…KRWR). Residues 608 to 623 (KEADVQRNRNRRERET) show a composition bias toward basic and acidic residues. Over residues 651–661 (PEIPSQQPPEE) the composition is skewed to low complexity. A compositionally biased stretch (polar residues) spans 733–742 (APNSSSSSNK). A compositionally biased stretch (low complexity) spans 869-884 (SSSWRSQQSQNSYYSH). Composition is skewed to polar residues over residues 888-934 (EIAS…QQQA) and 942-953 (THPYWNQNKRWR).

As to quaternary structure, interacts with SUF4. Expressed in shoot apex, root apex, leaf primordia and floral buds.

It is found in the nucleus. Functionally, seems to play a role in the regulation of flowering time in the autonomous flowering pathway by repressing FLOWERING LOCUS C expression. The sequence is that of Homeobox protein LUMINIDEPENDENS (LD) from Arabidopsis thaliana (Mouse-ear cress).